Consider the following 1237-residue polypeptide: Anion exchange protein 2 (1237 aa).

The segment at 1–237 (MSSAPRRPAS…SYNLQERRRI (237 aa)) is disordered. Residues 1–704 (MSSAPRRPAS…DFRDALDPQC (704 aa)) lie on the Cytoplasmic side of the membrane. Composition is skewed to basic and acidic residues over residues 37 to 49 (ELHRTLGVERFEE) and 58 to 75 (GGEEPGRSYGEEDFEYHR). Basic residues-rich tracts occupy residues 76–85 (QSSHHIHHPL) and 94–110 (RRRKTPQGPGRKSRRRP). A phosphoserine mark is found at S113, S132, S144, S170, and S172. Acidic residues predominate over residues 120-133 (TIEEGEEDEDEASE). Over residues 137–151 (ARAPTQPSPASTPSS) the composition is skewed to low complexity. A compositionally biased stretch (gly residues) spans 205–215 (GTAGGDDGGAS). S239 carries the post-translational modification Phosphoserine. Residue T253 is modified to Phosphothreonine. N6-methyllysine is present on K270. Residues 286–316 (RKNAKGSVQSGREGREPGPTPRARPRAPHKP) are disordered. The residue at position 439 (S439) is a Phosphoserine. The interval 445–466 (SLLGHHHGQGAESDPHVTEPLI) is disordered. The interval 704–1237 (CLAAVIFIYF…DEYNEMPMPV (534 aa)) is membrane (anion exchange). 4 helical membrane-spanning segments follow: residues 705-725 (LAAVIFIYFAALSPAITFGGL), 750-770 (FCLLGAQPLLVIGFSGPLLVF), 792-812 (IGFWLVLLALLMVALEGSFLV), and 822-842 (IFAFLISLIFIYETFYKLVKI). At 843 to 893 (FQEHPLHGCSVSNSSEADSGDNATWAGTRVTLGLGNGSSAGPAGQGRPRGQ) the chain is on the extracellular side. N-linked (GlcNAc...) asparagine glycans are attached at residues N855, N864, and N878. Residues 894–914 (PNTALLSLVLMAGTFFIAFFL) traverse the membrane as a helical segment. Topologically, residues 915 to 929 (RKFKNGRFFPGRVRR) are cytoplasmic. Transmembrane regions (helical) follow at residues 930-950 (VIGDFGVPIAILIMVLVDYSI), 985-1005 (FPVWMMVASLLPAILVFILIF), 1032-1052 (LLLIVAMGGICALFGLPWLAA), 1086-1106 (RVTGLLVALLVGLSIVIGDLL), and 1109-1129 (IPLAVLFGIFLYMGVTSLNGI). A lipid anchor (S-palmitoyl cysteine) is attached at C1169. Residues 1170 to 1190 (LALLWAVMSTAASLAFPFILI) traverse the membrane as a helical segment.

It belongs to the anion exchanger (TC 2.A.31) family.

Its subcellular location is the apical cell membrane. The protein localises to the basolateral cell membrane. The catalysed reaction is hydrogencarbonate(in) + chloride(out) = hydrogencarbonate(out) + chloride(in). Its function is as follows. Sodium-independent anion exchanger which mediates the electroneutral exchange of chloride for bicarbonate ions across the cell membrane. Plays an important role in osteoclast differentiation and function. Regulates bone resorption and calpain-dependent actin cytoskeleton organization in osteoclasts via anion exchange-dependent control of pH. Essential for intracellular pH regulation in CD8(+) T-cells upon CD3 stimulation, modulating CD8(+) T-cell response. This chain is Anion exchange protein 2 (SLC4A2), found in Equus caballus (Horse).